A 392-amino-acid polypeptide reads, in one-letter code: Speckle-type POZ protein-like B (392 aa).

The 131-residue stretch at 31 to 161 (KFSYMWTINN…DDKLTLFCEV (131 aa)) folds into the MATH domain. The 68-residue stretch at 200–267 (TDCSLFVGGQ…IYTGKAPNLE (68 aa)) folds into the BTB domain.

This sequence belongs to the Tdpoz family. As to quaternary structure, homodimer. Heterodimer with SPOP. Component of cullin-RING-based BCR (BTB-CUL3-RBX1) E3 ubiquitin-protein ligase complexes containing homodimeric SPOPL or the heterodimer formed by SPOP and SPOPL.

The protein resides in the nucleus. It functions in the pathway protein modification; protein ubiquitination. Component of a cullin-RING-based BCR (BTB-CUL3-RBX1) E3 ubiquitin-protein ligase complex that mediates the ubiquitination and subsequent proteasomal degradation of target proteins, but with relatively low efficiency. The protein is Speckle-type POZ protein-like B (spoplb) of Danio rerio (Zebrafish).